The sequence spans 123 residues: Small ribosomal subunit protein uS13 (123 aa).

Residues Pro97–Lys123 are disordered.

It belongs to the universal ribosomal protein uS13 family. Part of the 30S ribosomal subunit. Forms a loose heterodimer with protein S19. Forms two bridges to the 50S subunit in the 70S ribosome.

Located at the top of the head of the 30S subunit, it contacts several helices of the 16S rRNA. In the 70S ribosome it contacts the 23S rRNA (bridge B1a) and protein L5 of the 50S subunit (bridge B1b), connecting the 2 subunits; these bridges are implicated in subunit movement. Contacts the tRNAs in the A and P-sites. This Ehrlichia chaffeensis (strain ATCC CRL-10679 / Arkansas) protein is Small ribosomal subunit protein uS13.